The chain runs to 656 residues: UV-damage endonuclease (656 aa).

7 disordered regions span residues 1–82, 119–146, 175–194, 241–264, 492–515, 550–620, and 636–656; these read MPSR…GKEQ, PSVV…KEPV, IIEP…RPPA, PLQF…EPQD, EPCD…TLPP, DMVP…GPYN, and KREV…EFDG. Positions 13–32 are enriched in low complexity; it reads TPQSESSTFSSTLDSSAPSP. 2 stretches are compositionally biased toward basic and acidic residues: residues 48–82 and 135–146; these read SEKD…GKEQ and TNAEEREAKEPV. Over residues 550-561 the composition is skewed to basic and acidic residues; that stretch reads DMVPYDRDDENR. A compositionally biased stretch (basic residues) spans 568–579; it reads APKKKKGGKRKR. The segment covering 583–595 has biased composition (acidic residues); it reads EEAAEPEEVDTAA. Residues 596 to 614 show a composition bias toward basic and acidic residues; the sequence is DDVKDAPEGPKEVPEEERA. Over residues 647–656 the composition is skewed to acidic residues; it reads EVEDEGEFDG.

Belongs to the uve1/UvsE family. Mg(2+) is required as a cofactor.

Its function is as follows. Endonuclease for the repair of UV-irradiated DNA. Involved in the excision of cyclobutane pyrimidine dimers (CPD) and 6-4 pyrimidine pyrimidones (6-4PP) which forms the UV damage repair (UVDR) pathway. This is UV-damage endonuclease (mus-18) from Neurospora crassa (strain ATCC 24698 / 74-OR23-1A / CBS 708.71 / DSM 1257 / FGSC 987).